The chain runs to 159 residues: Heavy metal-associated isoprenylated plant protein 28 (159 aa).

Positions 10-73 constitute an HMA domain; it reads LQTIEMRVHM…KVRKTGRRAE (64 aa). Positions 21 and 24 each coordinate a metal cation. Position 156 is a cysteine methyl ester (C156). A lipid anchor (S-farnesyl cysteine) is attached at C156. Positions 157–159 are cleaved as a propeptide — removed in mature form; that stretch reads SIM.

This sequence belongs to the HIPP family.

Heavy-metal-binding protein. This Arabidopsis thaliana (Mouse-ear cress) protein is Heavy metal-associated isoprenylated plant protein 28.